The following is a 37-amino-acid chain: Large ribosomal subunit protein bL36c (37 aa).

The protein belongs to the bacterial ribosomal protein bL36 family.

It is found in the plastid. The chain is Large ribosomal subunit protein bL36c from Cuscuta exaltata (Tall dodder).